A 696-amino-acid polypeptide reads, in one-letter code: MASSPQVHPYKKHLMQSQHINFDNRGLQFQNSSLKVGQDFSDNKENRENRDNEDFSTADLPKRSANQPLINEHLRAASVPLLSNDIGNSQEEDFVPVPPPQLHLNNSNNTSLSSLGSTPTNSPSPGALRQTNSSTSLTKEQIKKRTRSVDLSHMYLLNGSSDTQLTATNESVADLSHQMISRYLGGKNNTSLVPRLKTIEMYRQNVKKSKDPEVLFQYAQYMLQTALTIESSNALVQDSDKEGNVSQSDLKLQFLKEAQSYLKKLSIKGYSDAQYLLADGYSSGAFGKIENKEAFVLFQAAAKHGHIESAYRASHCLEEGLGTTRDSRKSVNFLKFAASRNHPSAMYKLGLYSFYGRMGLPTDVNTKLNGVKWLSRAAARANELTAAAPYELAKIYHEGFLDVVIPDEKYAMELYIQAASLGHVPSATLLAQIYETGNDTVGQDTSLSVHYYTQAALKGDSVAMLGLCAWYLLGAEPAFEKDENEAFQWALRAANAGLPKAQFTLGYFYEHGKGCDRNMEYAWKWYEKAAGNEDKRAINKLRSRDGGLASIGKKQHKKNKSISTLNLFSTVDSQTSNVGSNSRVSSKSETFFTGNPKRDREPQGLQINMNSNTNRNGIKTGSDTSIRKSSSSAKGMSREVAEQSMAAKQEVSLSNMGSSNMIRKDFPAVKTESKKPTSLKNKKDKQGKKKKDCVIM.

Disordered regions lie at residues 37–67 (GQDF…SANQ) and 90–145 (QEED…IKKR). Basic and acidic residues predominate over residues 41–53 (SDNKENRENRDNE). A compositionally biased stretch (low complexity) spans 104–126 (LNNSNNTSLSSLGSTPTNSPSPG). Over residues 129–139 (RQTNSSTSLTK) the composition is skewed to polar residues. Ser-148 is subject to Phosphoserine. Sel1-like repeat units follow at residues 271–306 (SDAQ…KHGH), 307–342 (IESA…SRNH), 343–382 (PSAM…ARAN), 386–423 (AAAP…SLGH), 424–460 (VPSA…LKGD), 461–498 (SVAM…NAGL), and 499–534 (PKAQ…GNED). Phosphoserine occurs at positions 561 and 563. Thr-564 is subject to Phosphothreonine. 3 stretches are compositionally biased toward polar residues: residues 576 to 593 (SNVG…TFFT), 605 to 634 (LQIN…SSAK), and 651 to 661 (VSLSNMGSSNM). The disordered stretch occupies residues 576–696 (SNVGSNSRVS…GKKKKDCVIM (121 aa)). Basic and acidic residues predominate over residues 662-675 (IRKDFPAVKTESKK). Basic residues predominate over residues 680–696 (KNKKDKQGKKKKDCVIM). Cysteine methyl ester is present on Cys-693. Cys-693 is lipidated: S-farnesyl cysteine. Residues 694 to 696 (VIM) constitute a propeptide, removed in mature form.

This sequence belongs to the SKT5 family. As to quaternary structure, may interact with CHS3 and seems to be an adapter (along with BNI4) to link CHS3 to septins. Farnesylation is required for chitin synthase CHS3 activity but is not required for SKT5 membrane association.

The protein resides in the cell membrane. Its function is as follows. Activator of the chitin synthase CHS3 which polymerizes chitin, a structural polymer of the fungal cell wall. The chain is Chitin synthase regulator SKT5 from Saccharomyces cerevisiae (strain ATCC 204508 / S288c) (Baker's yeast).